The primary structure comprises 167 residues: Homing endonuclease I-ApeII (167 aa).

It belongs to the LAGLIDADG endonuclease family.

Its function is as follows. Endonuclease involved in rRNA intron I-gamma homing. This Aeropyrum pernix (strain ATCC 700893 / DSM 11879 / JCM 9820 / NBRC 100138 / K1) protein is Homing endonuclease I-ApeII (apeII).